The chain runs to 384 residues: Branched-chain-amino-acid aminotransferase 1, mitochondrial (384 aa).

The transit peptide at 1 to 18 (MALRRCLPQYSTTSSYLS) directs the protein to the mitochondrion. Lys231 bears the N6-(pyridoxal phosphate)lysine mark.

The protein belongs to the class-IV pyridoxal-phosphate-dependent aminotransferase family. The cofactor is pyridoxal 5'-phosphate.

It is found in the mitochondrion. The enzyme catalyses L-leucine + 2-oxoglutarate = 4-methyl-2-oxopentanoate + L-glutamate. The catalysed reaction is L-isoleucine + 2-oxoglutarate = (S)-3-methyl-2-oxopentanoate + L-glutamate. It catalyses the reaction L-valine + 2-oxoglutarate = 3-methyl-2-oxobutanoate + L-glutamate. The protein operates within amino-acid degradation; L-leucine degradation; 4-methyl-2-oxopentanoate from L-leucine (aminotransferase route): step 1/1. Its pathway is amino-acid degradation; L-valine degradation. Functionally, converts 2-oxo acids to branched-chain amino acids. Acts on leucine, isoleucine and valine. The sequence is that of Branched-chain-amino-acid aminotransferase 1, mitochondrial (BCAT1) from Arabidopsis thaliana (Mouse-ear cress).